We begin with the raw amino-acid sequence, 99 residues long: Plastocyanin (99 aa).

The 99-residue stretch at 1-99 (IEILLGGDDG…AGMVGKVTVN (99 aa)) folds into the Plastocyanin-like domain. Residues histidine 37, cysteine 84, histidine 87, and methionine 92 each contribute to the Cu cation site.

Belongs to the plastocyanin family. The cofactor is Cu(2+).

The protein localises to the plastid. The protein resides in the chloroplast thylakoid membrane. Its function is as follows. Participates in electron transfer between P700 and the cytochrome b6-f complex in photosystem I. In Cucumis sativus (Cucumber), this protein is Plastocyanin (PETE).